The chain runs to 491 residues: Protein OrfX3 (491 aa).

It belongs to the TULIP P47 family. As to quaternary structure, heterodimer of OrfX1 and OrfX3; crystallizes as a dimer of heterodimers.

In terms of biological role, expression of the ptox operon (ntnh-orfX1-orfX2-orfX3-pmp1) in B.thuringiensis kills Anopheles but not Aedes mosquito 3rd instar larvae. The ntnh-pmp1 construct is about half as toxic. This chain is Protein OrfX3, found in Paraclostridium bifermentans (Clostridium bifermentans).